The primary structure comprises 146 residues: Hemoglobin subunit delta (146 aa).

One can recognise a Globin domain in the interval 2–146; the sequence is HLTGDEKSAV…VATALAHKYH (145 aa). Position 50 is a phosphoserine (S50). Residues H63 and H92 each contribute to the heme b site.

The protein belongs to the globin family. Heterotetramer of two delta chains and two alpha chains. In terms of tissue distribution, red blood cells.

This Saimiri sciureus (Common squirrel monkey) protein is Hemoglobin subunit delta (HBD).